The following is a 665-amino-acid chain: Anaphase-promoting complex subunit 3 (665 aa).

One copy of the TPR 1 repeat lies at 115 to 148; the sequence is SCMLDVLGTMYKKAGFLKKATDCFVEAVSINPYN. Residues 191 to 257 mediate DNA binding; the sequence is VPEPSFLKKS…HQSLKLQSQS (67 aa). TPR repeat units lie at residues 329 to 362, 363 to 396, 431 to 464, 466 to 498, 499 to 532, 534 to 566, 568 to 600, and 601 to 634; these read LLKLFGKGVYLLAQYKLREALNCFQSLPIEQQNT, PFVLAKLGITYFELVDYEKSEEVFQKLRDLSPSR, PESWCILANCFSLQREHSQALKCINRAIQLDPTF, YAYTLQGHEHSANEEYEKSKTSFRKAIRVNVRH, YNAWYGLGMVYLKTGRNDQADFHFQRAAEINPNN, VLITCIGMIYERCKDYKKALDFYDRACKLDEKS, LARFKKAKVLILLHDHDKALVELEQLKAIAPDE, and ANVHFLLGKIFKQMRKKNLALKHFTIAWNLDGKA.

It belongs to the APC3/CDC27 family. As to quaternary structure, the APC/C is composed of at least 13 subunits: apc1, apc2, nuc2, apc4, apc5, cut9, apc8, apc10, apc11, hcn1, apc13, apc14 and apc15. Interacts with apc10 and cut9.

It is found in the nucleus. Its function is as follows. Component of the anaphase-promoting complex/cyclosome (APC/C), a cell cycle-regulated E3 ubiquitin-protein ligase complex that controls progression through mitosis and the G1 phase of the cell cycle. The APC/C is thought to confer substrate specificity and, in the presence of ubiquitin-conjugating E2 enzymes, it catalyzes the formation of protein-ubiquitin conjugates that are subsequently degraded by the 26S proteasome. Interacts with spindle apparatus, chromosomes, or nuclear envelope, and interconnect nuclear and cytoskeletal functions in mitosis, so the elongation of the spindle in anaphase is blocked. The chain is Anaphase-promoting complex subunit 3 (nuc2) from Schizosaccharomyces pombe (strain 972 / ATCC 24843) (Fission yeast).